Here is a 760-residue protein sequence, read N- to C-terminus: Golgin subfamily A member 5 (760 aa).

Residues 1 to 727 (MSWFVDLAGK…IFLRRYPMAR (727 aa)) are Cytoplasmic-facing. Positions 95-111 (VSSTTPLGSSSKASSNF) are enriched in polar residues. Disordered stretches follow at residues 95–114 (VSST…FVRP), 126–216 (DFLN…SQAD), and 432–456 (TEEK…EYTK). The segment covering 135–146 (QSEKKEVRRETV) has biased composition (basic and acidic residues). Polar residues predominate over residues 148–166 (KAFSPTGVSAQSQMPTVSL). The span at 174–201 (PSVTPTPSSTQGLSRNSSLGSLSSSSHS) shows a compositional bias: low complexity. Positions 249–668 (QGQEHVISNL…LQGGQNSASH (420 aa)) form a coiled coil. Over residues 441–450 (LQQQAKSSRS) the composition is skewed to polar residues. A helical; Anchor for type IV membrane protein transmembrane segment spans residues 728-748 (VFVIIYMALLHLWVMIVLLTY). At 749–760 (TPEMHHSHPDGR) the chain is on the extracellular side.

Its subcellular location is the golgi apparatus membrane. Involved in maintaining Golgi structure. Stimulates the formation of Golgi stacks and ribbons. Involved in intra-Golgi retrograde transport. The sequence is that of Golgin subfamily A member 5 (golga5) from Danio rerio (Zebrafish).